Here is a 285-residue protein sequence, read N- to C-terminus: HTH-type transcriptional regulator YofA (285 aa).

Residues 1–58 (MESGDLKIFQAVAREGSITKAAQMLNYVQSNVTARVHNLEEDLNIRLFHRTNRGMKLT) enclose the HTH lysR-type domain. A DNA-binding region (H-T-H motif) is located at residues 18 to 37 (ITKAAQMLNYVQSNVTARVH).

The protein belongs to the LysR transcriptional regulatory family.

It localises to the cytoplasm. In terms of biological role, regulates expression of the cell division protein ftsW, and is essential for cell viability during stationary phase. The polypeptide is HTH-type transcriptional regulator YofA (yofA) (Bacillus subtilis (strain 168)).